Reading from the N-terminus, the 338-residue chain is Lipoate-protein ligase A (338 aa).

The region spanning 29 to 216 (PATQRVLFLW…AFFEHYSERV (188 aa)) is the BPL/LPL catalytic domain. ATP-binding positions include Arg-71, 76 to 79 (GAVF), and Lys-134. Lys-134 lines the (R)-lipoate pocket.

It belongs to the LplA family. As to quaternary structure, monomer.

It is found in the cytoplasm. The catalysed reaction is L-lysyl-[lipoyl-carrier protein] + (R)-lipoate + ATP = N(6)-[(R)-lipoyl]-L-lysyl-[lipoyl-carrier protein] + AMP + diphosphate + H(+). It participates in protein modification; protein lipoylation via exogenous pathway; protein N(6)-(lipoyl)lysine from lipoate: step 1/2. Its pathway is protein modification; protein lipoylation via exogenous pathway; protein N(6)-(lipoyl)lysine from lipoate: step 2/2. Catalyzes both the ATP-dependent activation of exogenously supplied lipoate to lipoyl-AMP and the transfer of the activated lipoyl onto the lipoyl domains of lipoate-dependent enzymes. The sequence is that of Lipoate-protein ligase A from Enterobacter sp. (strain 638).